The primary structure comprises 467 residues: Hydroxyacid-oxoacid transhydrogenase, mitochondrial (467 aa).

An N6-acetyllysine modification is found at lysine 445. A Phosphoserine modification is found at serine 452.

It belongs to the iron-containing alcohol dehydrogenase family. Hydroxyacid-oxoacid transhydrogenase subfamily.

The protein localises to the mitochondrion. It carries out the reaction (S)-3-hydroxybutanoate + 2-oxoglutarate = (R)-2-hydroxyglutarate + acetoacetate. It catalyses the reaction 4-hydroxybutanoate + 2-oxoglutarate = (R)-2-hydroxyglutarate + succinate semialdehyde. Functionally, catalyzes the cofactor-independent reversible oxidation of gamma-hydroxybutyrate (GHB) to succinic semialdehyde (SSA) coupled to reduction of 2-ketoglutarate (2-KG) to D-2-hydroxyglutarate (D-2-HG). L-3-hydroxybutyrate (L-3-OHB) is also a substrate for HOT when using 2-KG as hydrogen acceptor, resulting in the formation of D-2-HG. The protein is Hydroxyacid-oxoacid transhydrogenase, mitochondrial (ADHFE1) of Pongo abelii (Sumatran orangutan).